A 244-amino-acid polypeptide reads, in one-letter code: Phosphoadenosine 5'-phosphosulfate reductase (244 aa).

Residue Cys-239 is the Nucleophile; cysteine thiosulfonate intermediate of the active site.

This sequence belongs to the PAPS reductase family. CysH subfamily.

It localises to the cytoplasm. It carries out the reaction [thioredoxin]-disulfide + sulfite + adenosine 3',5'-bisphosphate + 2 H(+) = [thioredoxin]-dithiol + 3'-phosphoadenylyl sulfate. The protein operates within sulfur metabolism; hydrogen sulfide biosynthesis; sulfite from sulfate: step 3/3. Functionally, catalyzes the formation of sulfite from phosphoadenosine 5'-phosphosulfate (PAPS) using thioredoxin as an electron donor. This is Phosphoadenosine 5'-phosphosulfate reductase from Shigella flexneri serotype 5b (strain 8401).